The sequence spans 473 residues: LEC14B protein (473 aa).

WD repeat units lie at residues 212–242 (GYSF…CVYD), 254–285 (AHES…KVWD), 301–331 (GHLE…KLWD), 377–413 (GHSV…YIYD), and 425–455 (YHKA…VKWE).

It belongs to the WD repeat LEC14B family.

This Lithospermum erythrorhizon (Purple gromwell) protein is LEC14B protein.